The sequence spans 826 residues: Outer membrane usher protein YehB (826 aa).

The first 22 residues, 1–22 (MLRMTPLASAIVALLLGIEAYA), serve as a signal peptide directing secretion. Residues cysteine 809 and cysteine 825 are joined by a disulfide bond.

It belongs to the fimbrial export usher family.

Its subcellular location is the cell outer membrane. In terms of biological role, part of the yehABCD fimbrial operon. Could contribute to adhesion to various surfaces in specific environmental niches. Probably involved in the export and assembly of fimbrial subunits across the outer membrane. The sequence is that of Outer membrane usher protein YehB (yehB) from Escherichia coli (strain K12).